The sequence spans 256 residues: tRNA pseudouridine synthase A (256 aa).

Residue Asp55 is the Nucleophile of the active site. Residue Tyr113 participates in substrate binding.

Belongs to the tRNA pseudouridine synthase TruA family. As to quaternary structure, homodimer.

The enzyme catalyses uridine(38/39/40) in tRNA = pseudouridine(38/39/40) in tRNA. Its function is as follows. Formation of pseudouridine at positions 38, 39 and 40 in the anticodon stem and loop of transfer RNAs. This chain is tRNA pseudouridine synthase A, found in Ligilactobacillus salivarius (strain UCC118) (Lactobacillus salivarius).